Here is a 544-residue protein sequence, read N- to C-terminus: CTP synthase (544 aa).

The interval 1–267 is amidoligase domain; it reads MAKFVFITGG…CREVLDVLDL (267 aa). Ser13 is a binding site for CTP. Ser13 lines the UTP pocket. ATP-binding positions include 14 to 19 and Asp71; that span reads SIGKGI. Positions 71 and 141 each coordinate Mg(2+). CTP is bound by residues 148–150, 188–193, and Lys224; these read DIE and KTKPTQ. UTP is bound by residues 188-193 and Lys224; that span reads KTKPTQ. Residues 292–534 enclose the Glutamine amidotransferase type-1 domain; sequence KVALVGKYIQ…IEAAQQRLPS (243 aa). Gly354 lines the L-glutamine pocket. Cys381 acts as the Nucleophile; for glutamine hydrolysis in catalysis. Residues 382 to 385, Glu405, and Arg462 each bind L-glutamine; that span reads LGMQ. Catalysis depends on residues His507 and Glu509.

Belongs to the CTP synthase family. In terms of assembly, homotetramer.

The catalysed reaction is UTP + L-glutamine + ATP + H2O = CTP + L-glutamate + ADP + phosphate + 2 H(+). It carries out the reaction L-glutamine + H2O = L-glutamate + NH4(+). It catalyses the reaction UTP + NH4(+) + ATP = CTP + ADP + phosphate + 2 H(+). It functions in the pathway pyrimidine metabolism; CTP biosynthesis via de novo pathway; CTP from UDP: step 2/2. Allosterically activated by GTP, when glutamine is the substrate; GTP has no effect on the reaction when ammonia is the substrate. The allosteric effector GTP functions by stabilizing the protein conformation that binds the tetrahedral intermediate(s) formed during glutamine hydrolysis. Inhibited by the product CTP, via allosteric rather than competitive inhibition. Its function is as follows. Catalyzes the ATP-dependent amination of UTP to CTP with either L-glutamine or ammonia as the source of nitrogen. Regulates intracellular CTP levels through interactions with the four ribonucleotide triphosphates. This Parasynechococcus marenigrum (strain WH8102) protein is CTP synthase.